The primary structure comprises 232 residues: BTB/POZ domain-containing protein KCTD11 (232 aa).

In terms of domain architecture, BTB spans 1-49 (MLGAMFRAGTPMPPNLNSQGGGHYFIDRDGKAFRHILNFLRLGRLDLPR).

In terms of assembly, homopentamer. Interacts with KCTD6 and KCTD21; KCTD11 and KCTD6 or KCTD21 may associate in pentameric assemblies. Component of the BCR(KCTD11) E3 ubiquitin ligase complex, at least composed of CUL3 and KCTD11 and RBX1. Interacts (via BTB domain) with CUL3; initially a 4:4 stoichiometry has been reported, however, electron microscopy revealed pentameric states of the BTB domain. As to expression, higher expression in cerebellum than in whole brain and lower expression in medulloblastoma.

The protein operates within protein modification; protein ubiquitination. In terms of biological role, plays a role as a marker and a regulator of neuronal differentiation; Up-regulated by a variety of neurogenic signals, such as retinoic acid, epidermal growth factor/EGF and NGFB/nerve growth factor. Induces apoptosis, growth arrest and the expression of cyclin-dependent kinase inhibitor CDKN1B. Plays a role as a tumor repressor and inhibits cell growth and tumorigenicity of medulloblastoma (MDB). Acts as a probable substrate-specific adapter for a BCR (BTB-CUL3-RBX1) E3 ubiquitin-protein ligase complex towards HDAC1. Functions as antagonist of the Hedgehog pathway on cell proliferation and differentiation by affecting the nuclear transfer of transcription factor GLI1, thus maintaining cerebellar granule cells in undifferentiated state, this effect probably occurs via HDAC1 down-regulation, keeping GLI1 acetylated and inactive. When knock-down, Hedgehog antagonism is impaired and proliferation of granule cells is sustained. Activates the caspase cascade. This Homo sapiens (Human) protein is BTB/POZ domain-containing protein KCTD11 (KCTD11).